Reading from the N-terminus, the 140-residue chain is MATQKTFVMIKPDGVRRKLIGEIVGRIERKGLRIAAMKMVKIDRETANKLYEEHIGKSFFNELVSYITSGPVVCMVVEGDEAVRVMRTLIGATDPKEASPGTIRGDLALSKAENVIHASDAEEKAKREMSLFFSPNEITE.

Residues K11, F59, R87, T93, R104, and N114 each coordinate ATP. H117 functions as the Pros-phosphohistidine intermediate in the catalytic mechanism.

It belongs to the NDK family. It depends on Mg(2+) as a cofactor.

The protein localises to the cytoplasm. It catalyses the reaction a 2'-deoxyribonucleoside 5'-diphosphate + ATP = a 2'-deoxyribonucleoside 5'-triphosphate + ADP. The catalysed reaction is a ribonucleoside 5'-diphosphate + ATP = a ribonucleoside 5'-triphosphate + ADP. In terms of biological role, major role in the synthesis of nucleoside triphosphates other than ATP. The ATP gamma phosphate is transferred to the NDP beta phosphate via a ping-pong mechanism, using a phosphorylated active-site intermediate. The chain is Nucleoside diphosphate kinase from Metallosphaera sedula (strain ATCC 51363 / DSM 5348 / JCM 9185 / NBRC 15509 / TH2).